Consider the following 299-residue polypeptide: Virginiamycin B lyase (299 aa).

H229 serves as a coordination point for substrate. E269 is a binding site for Mg(2+). H271 serves as the catalytic Proton acceptor. E286 provides a ligand contact to Mg(2+).

It belongs to the Vgb family. Monomer. It depends on Mg(2+) as a cofactor.

In terms of biological role, inactivates the type B streptogramin antibiotics by linearizing the lactone ring at the ester linkage, generating a free phenylglycine carboxylate and converting the threonyl moiety into 2-amino-butenoic acid. The polypeptide is Virginiamycin B lyase (vgb) (Bordetella pertussis (strain Tohama I / ATCC BAA-589 / NCTC 13251)).